The following is a 225-amino-acid chain: Pyridoxine/pyridoxamine 5'-phosphate oxidase (225 aa).

Residues R9 to Y12 and K78 each bind substrate. FMN-binding positions include R73 to K78, Y88 to T89, K95, and Q117. The substrate site is built by Y135, R139, and S143. FMN contacts are provided by residues Q152–S153 and W198. R204–H206 serves as a coordination point for substrate. Residue R208 coordinates FMN.

It belongs to the pyridoxamine 5'-phosphate oxidase family. In terms of assembly, homodimer. It depends on FMN as a cofactor.

It carries out the reaction pyridoxamine 5'-phosphate + O2 + H2O = pyridoxal 5'-phosphate + H2O2 + NH4(+). The enzyme catalyses pyridoxine 5'-phosphate + O2 = pyridoxal 5'-phosphate + H2O2. It functions in the pathway cofactor metabolism; pyridoxal 5'-phosphate salvage; pyridoxal 5'-phosphate from pyridoxamine 5'-phosphate: step 1/1. Its pathway is cofactor metabolism; pyridoxal 5'-phosphate salvage; pyridoxal 5'-phosphate from pyridoxine 5'-phosphate: step 1/1. Functionally, catalyzes the oxidation of either pyridoxine 5'-phosphate (PNP) or pyridoxamine 5'-phosphate (PMP) into pyridoxal 5'-phosphate (PLP). The polypeptide is Pyridoxine/pyridoxamine 5'-phosphate oxidase (Nocardia farcinica (strain IFM 10152)).